A 245-amino-acid chain; its full sequence is uncharacterized protein (245 aa).

This is an uncharacterized protein from Rhodobacter capsulatus (Rhodopseudomonas capsulata).